We begin with the raw amino-acid sequence, 384 residues long: Carbamoyl phosphate synthase small chain (384 aa).

Residues 1 to 192 (MIKKIPAILV…LADRNREKIY (192 aa)) are CPSase. L-glutamine contacts are provided by Ser51, Gly244, and Gly246. Residues 196–382 (KVIVIDFGVK…IEIMKQFRKE (187 aa)) form the Glutamine amidotransferase type-1 domain. Cys272 (nucleophile) is an active-site residue. Met273, Gln276, Asn312, Gly314, and Phe315 together coordinate L-glutamine. Catalysis depends on residues His355 and Glu357.

Belongs to the CarA family. In terms of assembly, composed of two chains; the small (or glutamine) chain promotes the hydrolysis of glutamine to ammonia, which is used by the large (or ammonia) chain to synthesize carbamoyl phosphate. Tetramer of heterodimers (alpha,beta)4.

It localises to the plastid. Its subcellular location is the chloroplast. It carries out the reaction hydrogencarbonate + L-glutamine + 2 ATP + H2O = carbamoyl phosphate + L-glutamate + 2 ADP + phosphate + 2 H(+). The enzyme catalyses L-glutamine + H2O = L-glutamate + NH4(+). The protein operates within amino-acid biosynthesis; L-arginine biosynthesis; carbamoyl phosphate from bicarbonate: step 1/1. It participates in pyrimidine metabolism; UMP biosynthesis via de novo pathway; (S)-dihydroorotate from bicarbonate: step 1/3. Its function is as follows. Small subunit of the glutamine-dependent carbamoyl phosphate synthetase (CPSase). CPSase catalyzes the formation of carbamoyl phosphate from the ammonia moiety of glutamine, carbonate, and phosphate donated by ATP, constituting the first step of 2 biosynthetic pathways, one leading to arginine and/or urea and the other to pyrimidine nucleotides. The small subunit (glutamine amidotransferase) binds and cleaves glutamine to supply the large subunit with the substrate ammonia. The protein is Carbamoyl phosphate synthase small chain of Porphyra purpurea (Red seaweed).